We begin with the raw amino-acid sequence, 483 residues long: Nucleolar protein 4 (483 aa).

Disordered regions lie at residues 210–418 (QQDE…PIPS) and 435–483 (SESR…DPQI). A compositionally biased stretch (acidic residues) spans 211–225 (QDEDESSIESDEFDM). Polar residues-rich tracts occupy residues 229–254 (TRMS…TVHG), 262–271 (AESSNGNETL), and 302–317 (QPLN…QLTS). Composition is skewed to basic and acidic residues over residues 319–330 (FRIDDQGSDGKN) and 340–350 (LKMEREARENG). Over residues 351–363 (SKSPAHSYSSYDS) the composition is skewed to polar residues. Composition is skewed to basic and acidic residues over residues 364-374 (GKNESVDRGAE), 391-409 (HEDS…ERLK), and 435-451 (SESR…KAQD). Residues 467 to 483 (ATYSTATVPGSQEDPQI) are compositionally biased toward polar residues.

It is found in the nucleus. Its subcellular location is the nucleolus. In Mus musculus (Mouse), this protein is Nucleolar protein 4 (Nol4).